The following is a 243-amino-acid chain: uncharacterized protein (243 aa).

Composition is skewed to basic and acidic residues over residues Met1–Glu11 and Arg167–Arg178. Disordered stretches follow at residues Met1–Arg26 and Glu146–Phe243. The span at Ser185–Glu200 shows a compositional bias: low complexity.

This is an uncharacterized protein from Canis lupus familiaris (Dog).